Consider the following 264-residue polypeptide: Carbonic anhydrase (264 aa).

The segment at residues 1 to 33 is a signal peptide (tat-type signal); sequence MSSTLYRRQLLKLLGMSVLGTSFSSCVTSPARA. The Alpha-carbonic anhydrase domain maps to 36–264; that stretch reads VNWGYIGKVG…LNDRLVIEAI (229 aa). Zn(2+) is bound by residues H127, H129, and H146. Residue 214–215 coordinates substrate; that stretch reads TT.

This sequence belongs to the alpha-carbonic anhydrase family. Zn(2+) is required as a cofactor. In terms of processing, predicted to be exported by the Tat system. The position of the signal peptide cleavage has not been experimentally proven.

It catalyses the reaction hydrogencarbonate + H(+) = CO2 + H2O. Reversible hydration of carbon dioxide. This chain is Carbonic anhydrase (ecaA), found in Nostoc sp. (strain PCC 7120 / SAG 25.82 / UTEX 2576).